The following is a 359-amino-acid chain: Pheromone receptor 1 (359 aa).

The next 7 membrane-spanning stretches (helical) occupy residues 5-25 (VTPF…GWHI), 33-53 (ITLS…SVAW), 71-87 (LRHA…LVIA), 110-130 (IIID…LMIV), 147-167 (FLSL…IVSF), 206-226 (LLVL…GSVS), and 268-288 (LILS…MFGL). The segment at 335-359 (TSGGIDGSPHSEKFSINTPTKYEEA) is disordered. Polar residues predominate over residues 348–359 (FSINTPTKYEEA).

Belongs to the G-protein coupled receptor 4 family.

Its subcellular location is the membrane. Functionally, receptor for the A2 pheromone, a prenylated mating factor. This chain is Pheromone receptor 1 (PRA1), found in Ustilago hordei (Barley covered smut fungus).